Here is a 494-residue protein sequence, read N- to C-terminus: Ketol-acid reductoisomerase (NADP(+)) (494 aa).

The 195-residue stretch at 14–208 folds into the KARI N-terminal Rossmann domain; it reads LDQIGRCRFM…GGDRAGVLES (195 aa). NADP(+) is bound by residues 45 to 48, arginine 68, arginine 76, serine 78, and 108 to 110; these read CGAQ and DKQ. The active site involves histidine 132. Glycine 158 contacts NADP(+). 2 KARI C-terminal knotted domains span residues 209 to 344 and 345 to 487; these read SFVA…NAPE and YNGK…MTDM. Residues aspartate 217, glutamate 221, glutamate 389, and glutamate 393 each coordinate Mg(2+). Residue serine 414 participates in substrate binding.

This sequence belongs to the ketol-acid reductoisomerase family. Mg(2+) is required as a cofactor.

It catalyses the reaction (2R)-2,3-dihydroxy-3-methylbutanoate + NADP(+) = (2S)-2-acetolactate + NADPH + H(+). It carries out the reaction (2R,3R)-2,3-dihydroxy-3-methylpentanoate + NADP(+) = (S)-2-ethyl-2-hydroxy-3-oxobutanoate + NADPH + H(+). The protein operates within amino-acid biosynthesis; L-isoleucine biosynthesis; L-isoleucine from 2-oxobutanoate: step 2/4. It functions in the pathway amino-acid biosynthesis; L-valine biosynthesis; L-valine from pyruvate: step 2/4. Functionally, involved in the biosynthesis of branched-chain amino acids (BCAA). Catalyzes an alkyl-migration followed by a ketol-acid reduction of (S)-2-acetolactate (S2AL) to yield (R)-2,3-dihydroxy-isovalerate. In the isomerase reaction, S2AL is rearranged via a Mg-dependent methyl migration to produce 3-hydroxy-3-methyl-2-ketobutyrate (HMKB). In the reductase reaction, this 2-ketoacid undergoes a metal-dependent reduction by NADPH to yield (R)-2,3-dihydroxy-isovalerate. The chain is Ketol-acid reductoisomerase (NADP(+)) from Pseudoalteromonas atlantica (strain T6c / ATCC BAA-1087).